Consider the following 508-residue polypeptide: MKFVLLLSLIGFCWAQYDPHTSDGRTAIVHLFEWRWVDIAKECERYLAPKGFGGVQVSPPNENVVVHNPSRPWWERYQPISYKICTRSGNEDEFRDMVTRCNNVGVRIYVDAVINHMCGAGNPAGTSSTCGSYLNPNNREFPAVPYSAWDFNDNKCNGEIDNYNDAYQVRNCRLTGLLDLALEKDYVRTKVADYMNHLIDIGVAGFRLDAAKHMWPGDIKAVLDKLHNLNTKWFSQGSRPFIFQEVIDLGGEAIKGSEYFGNGRVTEFKYGAKLGTVIRKWNGEKMSYLKNWGEGWGLVPSDRALVFVDNHDNQRGHGAGGSSILTFWDARMYKMAVGFMLAHPYGFTRVMSSYRWNRNFQNGKDQNDWIGPPNNNGVTKEVTINADTTCGNDWVCEHRWRQIRNMVAFRNVVNGQPFSNWWDNNSNQVAFSRGNRGFIVFNNDDWALSATLQTGLPAGTYCDVISGDKVDGNCTGLRVNVGSDGKAHFSISNSAEDPFIAIHADSKL.

Positions 1-15 (MKFVLLLSLIGFCWA) are cleaved as a signal peptide. A Pyrrolidone carboxylic acid modification is found at Gln-16. Disulfide bonds link Cys-43-Cys-101, Cys-85-Cys-130, and Cys-156-Cys-172. Residues Asn-115, Arg-170, and Asp-179 each coordinate Ca(2+). Arg-207 is a chloride binding site. The active-site Nucleophile is Asp-209. His-213 lines the Ca(2+) pocket. Glu-245 functions as the Proton donor in the catalytic mechanism. The chloride site is built by Asn-310 and Arg-349. 2 disulfides stabilise this stretch: Cys-390-Cys-396 and Cys-462-Cys-474.

This sequence belongs to the glycosyl hydrolase 13 family. In terms of assembly, monomer. Ca(2+) is required as a cofactor. The cofactor is chloride.

The protein resides in the secreted. The protein localises to the extracellular space. It catalyses the reaction Endohydrolysis of (1-&gt;4)-alpha-D-glucosidic linkages in polysaccharides containing three or more (1-&gt;4)-alpha-linked D-glucose units.. This Mus musculus (Mouse) protein is Pancreatic alpha-amylase 2a5.